A 148-amino-acid polypeptide reads, in one-letter code: Vascular endothelial growth factor homolog (148 aa).

The signal sequence occupies residues 1–25 (MKLTATLQVVVALLICMYNLPECVS). 3 cysteine pairs are disulfide-bonded: Cys-46/Cys-88, Cys-77/Cys-130, and Cys-81/Cys-132. Asn-95 is a glycosylation site (N-linked (GlcNAc...) asparagine; by host).

The protein belongs to the PDGF/VEGF growth factor family. In terms of assembly, homodimer; disulfide-linked.

Its subcellular location is the secreted. In terms of biological role, induces endothelial proliferation. The chain is Vascular endothelial growth factor homolog from Orf virus (strain NZ7) (OV NZ-7).